Here is a 208-residue protein sequence, read N- to C-terminus: MAGTARHDREMAIQAKKKLTTATDPIERLRLQCLARGSAGIKGLGRVFRIMDDDNNRTLDFKEFMKGLNDYAVVMEKEEVEELFRRFDKDGNGTIDFNEFLLTLRPPMSRARKEVIMQAFRKLDKTGDGVITIEDLREVYNAKHHPKYQNGEWSEEQVFRKFLDNFDSPYDKDGLVTPEEFMNYYAGVSASIDTDVYFIIMMRTAWKL.

EF-hand domains follow at residues 39–74 (AGIK…YAVV), 75–110 (MEKE…PMSR), 111–146 (ARKE…KHHP), and 154–191 (SEEQ…VSAS). Ca(2+) contacts are provided by Asp52, Asp54, Asn56, Thr58, Glu63, Asp88, Asp90, Asn92, Thr94, and Glu99.

It localises to the cytoplasm. The sequence is that of Calcyphosin-like protein (CAPSL) from Homo sapiens (Human).